The chain runs to 80 residues: Exodeoxyribonuclease 7 small subunit (80 aa).

Belongs to the XseB family. As to quaternary structure, heterooligomer composed of large and small subunits.

The protein localises to the cytoplasm. The enzyme catalyses Exonucleolytic cleavage in either 5'- to 3'- or 3'- to 5'-direction to yield nucleoside 5'-phosphates.. In terms of biological role, bidirectionally degrades single-stranded DNA into large acid-insoluble oligonucleotides, which are then degraded further into small acid-soluble oligonucleotides. The chain is Exodeoxyribonuclease 7 small subunit from Vibrio parahaemolyticus serotype O3:K6 (strain RIMD 2210633).